A 78-amino-acid chain; its full sequence is D-alanyl carrier protein (78 aa).

One can recognise a Carrier domain in the interval 1–78; the sequence is MEFKQEVLDV…NIVNKLTELK (78 aa). Ser36 is modified (O-(pantetheine 4'-phosphoryl)serine).

The protein belongs to the DltC family. 4'-phosphopantetheine is transferred from CoA to a specific serine of apo-DCP.

It localises to the cytoplasm. Its pathway is cell wall biogenesis; lipoteichoic acid biosynthesis. Carrier protein involved in the D-alanylation of lipoteichoic acid (LTA). The loading of thioester-linked D-alanine onto DltC is catalyzed by D-alanine--D-alanyl carrier protein ligase DltA. The DltC-carried D-alanyl group is further transferred to cell membrane phosphatidylglycerol (PG) by forming an ester bond, probably catalyzed by DltD. D-alanylation of LTA plays an important role in modulating the properties of the cell wall in Gram-positive bacteria, influencing the net charge of the cell wall. The chain is D-alanyl carrier protein from Bacillus velezensis (strain DSM 23117 / BGSC 10A6 / LMG 26770 / FZB42) (Bacillus amyloliquefaciens subsp. plantarum).